Reading from the N-terminus, the 669-residue chain is DNA ligase (669 aa).

NAD(+)-binding positions include 32 to 36, 81 to 82, and Glu-113; these read DAEYD and SL. Lys-115 functions as the N6-AMP-lysine intermediate in the catalytic mechanism. Residues Arg-136, Glu-173, Lys-290, and Lys-314 each coordinate NAD(+). Residues Cys-408, Cys-411, Cys-426, and Cys-432 each coordinate Zn(2+). In terms of domain architecture, BRCT spans 592–669; it reads AVDSALAGKI…DEQALIEFLK (78 aa).

This sequence belongs to the NAD-dependent DNA ligase family. LigA subfamily. Mg(2+) serves as cofactor. The cofactor is Mn(2+).

It carries out the reaction NAD(+) + (deoxyribonucleotide)n-3'-hydroxyl + 5'-phospho-(deoxyribonucleotide)m = (deoxyribonucleotide)n+m + AMP + beta-nicotinamide D-nucleotide.. Its function is as follows. DNA ligase that catalyzes the formation of phosphodiester linkages between 5'-phosphoryl and 3'-hydroxyl groups in double-stranded DNA using NAD as a coenzyme and as the energy source for the reaction. It is essential for DNA replication and repair of damaged DNA. The chain is DNA ligase from Vibrio cholerae serotype O1 (strain ATCC 39315 / El Tor Inaba N16961).